A 779-amino-acid polypeptide reads, in one-letter code: Ribosome-releasing factor 2, mitochondrial (779 aa).

The tr-type G domain maps to 68 to 353; the sequence is AKIRNIGIMA…AVTTYLPSPE (286 aa). GTP is bound by residues 77 to 84, 141 to 145, and 195 to 198; these read AHIDAGKT, DTPGH, and NKMD.

Belongs to the TRAFAC class translation factor GTPase superfamily. Classic translation factor GTPase family. EF-G/EF-2 subfamily.

Its subcellular location is the mitochondrion. The enzyme catalyses GTP + H2O = GDP + phosphate + H(+). Mitochondrial GTPase that mediates the disassembly of ribosomes from messenger RNA at the termination of mitochondrial protein biosynthesis. Acts in collaboration with MRRF. GTP hydrolysis follows the ribosome disassembly and probably occurs on the ribosome large subunit. Not involved in the GTP-dependent ribosomal translocation step during translation elongation. The polypeptide is Ribosome-releasing factor 2, mitochondrial (Gfm2) (Mus musculus (Mouse)).